Reading from the N-terminus, the 235-residue chain is Ribonuclease PH (235 aa).

Residues arginine 86 and 124–126 (GTR) each bind phosphate.

The protein belongs to the RNase PH family. As to quaternary structure, homohexameric ring arranged as a trimer of dimers.

The catalysed reaction is tRNA(n+1) + phosphate = tRNA(n) + a ribonucleoside 5'-diphosphate. Its function is as follows. Phosphorolytic 3'-5' exoribonuclease that plays an important role in tRNA 3'-end maturation. Removes nucleotide residues following the 3'-CCA terminus of tRNAs; can also add nucleotides to the ends of RNA molecules by using nucleoside diphosphates as substrates, but this may not be physiologically important. Probably plays a role in initiation of 16S rRNA degradation (leading to ribosome degradation) during starvation. This is Ribonuclease PH from Legionella pneumophila (strain Corby).